A 360-amino-acid chain; its full sequence is Lipid-A-disaccharide synthase (360 aa).

The protein belongs to the LpxB family.

It carries out the reaction a lipid X + a UDP-2-N,3-O-bis[(3R)-3-hydroxyacyl]-alpha-D-glucosamine = a lipid A disaccharide + UDP + H(+). It participates in bacterial outer membrane biogenesis; LPS lipid A biosynthesis. Functionally, condensation of UDP-2,3-diacylglucosamine and 2,3-diacylglucosamine-1-phosphate to form lipid A disaccharide, a precursor of lipid A, a phosphorylated glycolipid that anchors the lipopolysaccharide to the outer membrane of the cell. The sequence is that of Lipid-A-disaccharide synthase from Helicobacter pylori (strain G27).